A 278-amino-acid chain; its full sequence is Nucleotide-binding protein LHK_02029 (278 aa).

Residue 8 to 15 (GLAGSGKS) coordinates ATP. 57 to 60 (DTRD) lines the GTP pocket.

Belongs to the RapZ-like family.

Its function is as follows. Displays ATPase and GTPase activities. This Laribacter hongkongensis (strain HLHK9) protein is Nucleotide-binding protein LHK_02029.